We begin with the raw amino-acid sequence, 315 residues long: MWRGLPALALAALLLLGRAPAGRAAACEPVRIPLCKPLPWNMTKMPNHLHHSTQANAVLAMEQFEGLLGTNCSPDLLFFLCAMYAPICTIDFQHEPIKPCKSVCERARAGCEPVLIRYRHAWPESLACDELPLYDRGVCISPEAIVTAEGADFPMDSNNGNCRGTGIERCKCKPIKATQKTYLRNNYNYVIRAKVKEVKTKCHDVTAVVEVKEILKSSLVNIPKDTVNLYTNSGCLCPPLSANEEYIIMGYEDEERSRLLLVEGSIAEKWKDRLGKKVKRWDQKLRHLGKGKGEPGQSDSALKTGKPGNARQTRS.

Positions 1–21 are cleaved as a signal peptide; the sequence is MWRGLPALALAALLLLGRAPA. Residues 22–142 enclose the FZ domain; sequence GRAAACEPVR…LYDRGVCISP (121 aa). 5 disulfide bridges follow: Cys27–Cys88, Cys35–Cys81, Cys72–Cys111, Cys100–Cys139, and Cys104–Cys128. An N-linked (GlcNAc...) asparagine glycan is attached at Asn41. The NTR domain maps to 170–290; that stretch reads CKCKPIKATQ…WDQKLRHLGK (121 aa). Positions 284-315 are disordered; it reads KLRHLGKGKGEPGQSDSALKTGKPGNARQTRS.

It belongs to the secreted frizzled-related protein (sFRP) family.

It is found in the secreted. Its function is as follows. Soluble frizzled-related proteins (sFRPS) function as modulators of Wnt signaling through direct interaction with Wnts. They have a role in regulating cell growth and differentiation in specific cell types. SFRP3/FRZB appears to be involved in limb skeletogenesis. Antagonist of Wnt8 signaling. Regulates chondrocyte maturation and long bone development. The sequence is that of Secreted frizzled-related protein 3 (FRZB) from Gallus gallus (Chicken).